Here is a 385-residue protein sequence, read N- to C-terminus: WD repeat-containing protein RUP1 (385 aa).

WD repeat units follow at residues 69-108 (TGSD…ESRD), 119-160 (CTPA…PVSE), 163-205 (EHGG…TLEE), 210-250 (GGGA…DPLI), 254-292 (GHTK…RVVR), 298-337 (VNSR…PVWV), and 348-385 (SDRR…GKQS).

In terms of assembly, interacts with UVR8. Interacts directly with DHU1.

Its subcellular location is the nucleus. It localises to the cytoplasm. It is found in the cytosol. In terms of biological role, functions in association with RUP2 as repressor of UV-B-induced photomorphogenesis mediated by UVR8 and HY5, likely in coordination with DHU1. Plays a crucial negative feedback regulatory role downstream of UVR8-COP1 to inhibit UVR8 function, balance UV-B-specific responses and ensure normal plant growth. Is involved in the regulation of photoperiodic flowering and vegetative development. This is WD repeat-containing protein RUP1 from Arabidopsis thaliana (Mouse-ear cress).